A 210-amino-acid chain; its full sequence is Uracil phosphoribosyltransferase (210 aa).

5-phospho-alpha-D-ribose 1-diphosphate-binding positions include Arg-80, Arg-105, and 132-140 (DPMLATGGS). Uracil-binding positions include Ile-195 and 200–202 (GDA). Residue Asp-201 participates in 5-phospho-alpha-D-ribose 1-diphosphate binding.

Belongs to the UPRTase family. Mg(2+) serves as cofactor.

It carries out the reaction UMP + diphosphate = 5-phospho-alpha-D-ribose 1-diphosphate + uracil. It participates in pyrimidine metabolism; UMP biosynthesis via salvage pathway; UMP from uracil: step 1/1. Allosterically activated by GTP. In terms of biological role, catalyzes the conversion of uracil and 5-phospho-alpha-D-ribose 1-diphosphate (PRPP) to UMP and diphosphate. This Thermoanaerobacter pseudethanolicus (strain ATCC 33223 / 39E) (Clostridium thermohydrosulfuricum) protein is Uracil phosphoribosyltransferase.